The chain runs to 397 residues: uncharacterized protein (397 aa).

This is an uncharacterized protein from Nostoc sp. (strain PCC 7120 / SAG 25.82 / UTEX 2576).